A 62-amino-acid chain; its full sequence is Short neurotoxin C (62 aa).

Residues 1–16 (RRCFNQQSSQPQTNKS) are compositionally biased toward polar residues. The tract at residues 1–21 (RRCFNQQSSQPQTNKSCPPGE) is disordered. 4 cysteine pairs are disulfide-bonded: C3–C24, C17–C41, C43–C54, and C55–C60.

This sequence belongs to the three-finger toxin family. Short-chain subfamily. Type I alpha-neurotoxin sub-subfamily. Expressed by the venom gland.

Its subcellular location is the secreted. In terms of biological role, binds to muscle nicotinic acetylcholine receptor (nAChR) and inhibit acetylcholine from binding to the receptor, thereby impairing neuromuscular transmission. This chain is Short neurotoxin C, found in Laticauda crockeri (Crocker's sea snake).